We begin with the raw amino-acid sequence, 748 residues long: Catalase-peroxidase (748 aa).

Residues 92 to 238 (WHSAGTYRIG…LAAVQMGLIY (147 aa)) constitute a cross-link (tryptophyl-tyrosyl-methioninium (Trp-Tyr) (with M-264)). Histidine 93 functions as the Proton acceptor in the catalytic mechanism. Positions 238-264 (YVNPEGPDGNPDPIASARDIRDTFARM) form a cross-link, tryptophyl-tyrosyl-methioninium (Tyr-Met) (with W-92). Position 279 (histidine 279) interacts with heme b.

Belongs to the peroxidase family. Peroxidase/catalase subfamily. Homodimer or homotetramer. Heme b serves as cofactor. Formation of the three residue Trp-Tyr-Met cross-link is important for the catalase, but not the peroxidase activity of the enzyme.

It carries out the reaction H2O2 + AH2 = A + 2 H2O. It catalyses the reaction 2 H2O2 = O2 + 2 H2O. In terms of biological role, bifunctional enzyme with both catalase and broad-spectrum peroxidase activity. This Xanthomonas euvesicatoria pv. vesicatoria (strain 85-10) (Xanthomonas campestris pv. vesicatoria) protein is Catalase-peroxidase.